The chain runs to 413 residues: Gamma-glutamyl phosphate reductase (413 aa).

It belongs to the gamma-glutamyl phosphate reductase family.

The protein localises to the cytoplasm. It carries out the reaction L-glutamate 5-semialdehyde + phosphate + NADP(+) = L-glutamyl 5-phosphate + NADPH + H(+). It participates in amino-acid biosynthesis; L-proline biosynthesis; L-glutamate 5-semialdehyde from L-glutamate: step 2/2. Catalyzes the NADPH-dependent reduction of L-glutamate 5-phosphate into L-glutamate 5-semialdehyde and phosphate. The product spontaneously undergoes cyclization to form 1-pyrroline-5-carboxylate. In Lactococcus lactis subsp. cremoris (strain MG1363), this protein is Gamma-glutamyl phosphate reductase.